A 283-amino-acid chain; its full sequence is NADPH-dependent 7-cyano-7-deazaguanine reductase (283 aa).

A substrate-binding site is contributed by 90–92; that stretch reads IES. NADPH is bound at residue 92 to 93; it reads SK. Residue Cys190 is the Thioimide intermediate of the active site. The active-site Proton donor is Asp197. 229–230 lines the substrate pocket; it reads HE. 258–259 is an NADPH binding site; that stretch reads RG.

The protein belongs to the GTP cyclohydrolase I family. QueF type 2 subfamily. As to quaternary structure, homodimer.

It localises to the cytoplasm. The catalysed reaction is 7-aminomethyl-7-carbaguanine + 2 NADP(+) = 7-cyano-7-deazaguanine + 2 NADPH + 3 H(+). It functions in the pathway tRNA modification; tRNA-queuosine biosynthesis. Catalyzes the NADPH-dependent reduction of 7-cyano-7-deazaguanine (preQ0) to 7-aminomethyl-7-deazaguanine (preQ1). The chain is NADPH-dependent 7-cyano-7-deazaguanine reductase from Dechloromonas aromatica (strain RCB).